The primary structure comprises 154 residues: Methylglyoxal synthase (154 aa).

The MGS-like domain occupies 6-154 (SPLPANKAIA…AYMARRAQGN (149 aa)). Residues histidine 19, lysine 23, 45-48 (TGTT), and 65-66 (SG) contribute to the substrate site. The Proton donor/acceptor role is filled by aspartate 71. Position 98 (histidine 98) interacts with substrate.

It belongs to the methylglyoxal synthase family.

The enzyme catalyses dihydroxyacetone phosphate = methylglyoxal + phosphate. Its function is as follows. Catalyzes the formation of methylglyoxal from dihydroxyacetone phosphate. The polypeptide is Methylglyoxal synthase (Cellvibrio japonicus (strain Ueda107) (Pseudomonas fluorescens subsp. cellulosa)).